The chain runs to 53 residues: Mannose/glucose-specific lectin alpha 1 chain (53 aa).

The protein belongs to the leguminous lectin family. Tetramer of two alpha and two beta chains.

This is Mannose/glucose-specific lectin alpha 1 chain from Lathyrus ochrus (Cyprus-vetch).